A 1176-amino-acid chain; its full sequence is Carbamoyl phosphate synthase arginine-specific large chain (1176 aa).

A mitochondrion-targeting transit peptide spans 1–11; sequence MLRSISIASRA. The carboxyphosphate synthetic domain stretch occupies residues 70–465; that stretch reads SRSPDVKKVL…SLQKAIRQVD (396 aa). The ATP site is built by Arg-197, Arg-237, Gly-243, Gly-244, Lys-273, Leu-275, Glu-280, Gly-306, Thr-307, His-308, Gln-348, and Glu-362. An ATP-grasp 1 domain is found at 201–391; that stretch reads VQALNEIDIP…LAYTAAKIAL (191 aa). Residues Gln-348, Glu-362, and Asn-364 each contribute to the Mg(2+) site. Mn(2+)-binding residues include Gln-348, Glu-362, and Asn-364. The oligomerization domain stretch occupies residues 466–610; it reads PNFAGFEAYW…YTSYNATTHD (145 aa). The segment at 611–997 is carbamoyl phosphate synthetic domain; the sequence is VKFDNGTMVL…AYWAALLSVN (387 aa). The region spanning 734 to 931 is the ATP-grasp 2 domain; the sequence is SSILDSIGVD…FIDTASAAIM (198 aa). Arg-770, Gln-809, Ile-811, Glu-816, Gly-841, Val-842, His-843, Ser-844, Gln-884, and Glu-902 together coordinate ATP. Mg(2+) is bound by residues Gln-884, Glu-902, and Asn-904. Residues Gln-884, Glu-902, and Asn-904 each coordinate Mn(2+). The interval 998-1137 is allosteric domain; the sequence is GMKLPKANSG…NPIPYSEGFK (140 aa). The 156-residue stretch at 999 to 1154 folds into the MGS-like domain; that stretch reads MKLPKANSGI…RDFVGEAATT (156 aa).

The protein belongs to the CarB family. In terms of assembly, heterodimer composed of 2 chains; the small (or glutamine) chain promotes the hydrolysis of glutamine to ammonia, which is used by the large (or ammonia) chain to synthesize carbamoyl phosphate. Requires Mg(2+) as cofactor. Mn(2+) serves as cofactor.

The protein resides in the mitochondrion. The enzyme catalyses hydrogencarbonate + L-glutamine + 2 ATP + H2O = carbamoyl phosphate + L-glutamate + 2 ADP + phosphate + 2 H(+). The catalysed reaction is hydrogencarbonate + NH4(+) + 2 ATP = carbamoyl phosphate + 2 ADP + phosphate + 2 H(+). It functions in the pathway amino-acid biosynthesis; L-arginine biosynthesis; carbamoyl phosphate from bicarbonate: step 1/1. Its function is as follows. Large subunit of the arginine-specific carbamoyl phosphate synthase (CPSase). CPSase catalyzes the formation of carbamoyl phosphate from the ammonia moiety of glutamine, hydrogencarbonate, and phosphate donated by ATP, constituting the first step of 2 biosynthetic pathways, one leading to arginine and/or urea and the other to pyrimidine nucleotides. The large subunit (synthetase) binds the substrates ammonia (free or transferred from glutamine from the small subunit), hydrogencarbonate and ATP and carries out an ATP-coupled ligase reaction, activating hydrogencarbonate by forming carboxy phosphate which reacts with ammonia to form carbamoyl phosphate. The protein is Carbamoyl phosphate synthase arginine-specific large chain (argA) of Cutaneotrichosporon cutaneum (Yeast).